Here is a 134-residue protein sequence, read N- to C-terminus: uncharacterized protein (134 aa).

An N-terminal signal peptide occupies residues 1-26; that stretch reads MRLYKAMALCLPLVVICTSEVSQSTA. Residues 77–98 are disordered; sequence GEKNEEVAGPVDGEGSEEEAFD.

This is an uncharacterized protein from Encephalitozoon cuniculi (strain GB-M1) (Microsporidian parasite).